Here is a 175-residue protein sequence, read N- to C-terminus: MEEDDHAGKHDALSALSQWLWSKPLGQHNADLDDDEEVTTGQEELFLPEEQVRARHLFSQKTISREVPAEQSRSGRVYQTARHSLMECSRPTMSIKSQWSFWSSSPKPLPKIPVPSLTSWTHTVNSTPFPQLSTSSGSQSPGKGRLQRLTSTERNGTTLPRTNSGSSTKAMVLHR.

A homodimerization region spans residues 30 to 47; sequence ADLDDDEEVTTGQEELFL. Residues 50–156 are RNA-binding; it reads EQVRARHLFS…QRLTSTERNG (107 aa). Phosphoserine is present on residues Ser-64 and Ser-133. 2 stretches are compositionally biased toward polar residues: residues 116–141 and 148–169; these read SLTS…SQSP and RLTS…SSTK. Residues 116–175 form a disordered region; the sequence is SLTSWTHTVNSTPFPQLSTSSGSQSPGKGRLQRLTSTERNGTTLPRTNSGSSTKAMVLHR.

The protein belongs to the polerovirus movement protein family. Homodimer. In terms of processing, phosphorylated.

It localises to the host cell junction. Its subcellular location is the host plasmodesma. It is found in the host Golgi apparatus. Functionally, together with movement protein P3a, facilitates long-distance movement of virions in host. Transports viral genome to neighboring plant cells directly through plasmosdesmata, without any budding. The movement protein allows efficient cell to cell propagation, by bypassing the host cell wall barrier. Binds ssRNA. The polypeptide is Movement protein (Turnip yellows virus (isolate FL-1) (TuYV)).